We begin with the raw amino-acid sequence, 327 residues long: Lipoyl synthase (327 aa).

[4Fe-4S] cluster is bound by residues C74, C79, C85, C100, C104, C107, and S314. A Radical SAM core domain is found at 86–303 (FSGGTATFMI…AEEGEKMGFK (218 aa)).

It belongs to the radical SAM superfamily. Lipoyl synthase family. [4Fe-4S] cluster is required as a cofactor.

It is found in the cytoplasm. The catalysed reaction is [[Fe-S] cluster scaffold protein carrying a second [4Fe-4S](2+) cluster] + N(6)-octanoyl-L-lysyl-[protein] + 2 oxidized [2Fe-2S]-[ferredoxin] + 2 S-adenosyl-L-methionine + 4 H(+) = [[Fe-S] cluster scaffold protein] + N(6)-[(R)-dihydrolipoyl]-L-lysyl-[protein] + 4 Fe(3+) + 2 hydrogen sulfide + 2 5'-deoxyadenosine + 2 L-methionine + 2 reduced [2Fe-2S]-[ferredoxin]. It functions in the pathway protein modification; protein lipoylation via endogenous pathway; protein N(6)-(lipoyl)lysine from octanoyl-[acyl-carrier-protein]: step 2/2. Functionally, catalyzes the radical-mediated insertion of two sulfur atoms into the C-6 and C-8 positions of the octanoyl moiety bound to the lipoyl domains of lipoate-dependent enzymes, thereby converting the octanoylated domains into lipoylated derivatives. The polypeptide is Lipoyl synthase (Pseudomonas aeruginosa (strain LESB58)).